A 201-amino-acid polypeptide reads, in one-letter code: MKNPIIDNIPCVLLAGGKSSRFITNNIQTNKALMPLKSYSSLLEYQYTRLLKLFKKVIISTKKSYELNAPYLLEKESDLFSPLFGIHNAFLTLQTPYIFFIPIDTPLVSFESIKALCGIKNFSVTYAKSPTKEHYLISLWHQNTLNALIYALKTQNYRLSDLVKNTSSVAINFDKEEEFLNLNTLKDYELAVQILKKRANG.

GTP-binding positions include 14-16 (LAG), K31, and D104. D104 provides a ligand contact to Mg(2+).

It belongs to the MobA family. As to quaternary structure, monomer. Requires Mg(2+) as cofactor.

It localises to the cytoplasm. It catalyses the reaction Mo-molybdopterin + GTP + H(+) = Mo-molybdopterin guanine dinucleotide + diphosphate. In terms of biological role, transfers a GMP moiety from GTP to Mo-molybdopterin (Mo-MPT) cofactor (Moco or molybdenum cofactor) to form Mo-molybdopterin guanine dinucleotide (Mo-MGD) cofactor. In Helicobacter pylori (strain ATCC 700392 / 26695) (Campylobacter pylori), this protein is Molybdenum cofactor guanylyltransferase.